Reading from the N-terminus, the 919-residue chain is Beta-galactosidase 15 (919 aa).

The signal sequence occupies residues 1–31; the sequence is MAASRGPPLLGFRALALALLLAILLLLGCSA. N-linked (GlcNAc...) asparagine glycosylation occurs at asparagine 63. Glutamate 220 acts as the Proton donor in catalysis. Residue glutamate 289 is the Nucleophile of the active site. 4 N-linked (GlcNAc...) asparagine glycosylation sites follow: asparagine 412, asparagine 530, asparagine 546, and asparagine 855. An SUEL-type lectin domain is found at 822–907; that stretch reads NAATPELRLQ…KDLAVEAKCS (86 aa).

Belongs to the glycosyl hydrolase 35 family.

The protein resides in the secreted. It localises to the extracellular space. The protein localises to the apoplast. The enzyme catalyses Hydrolysis of terminal non-reducing beta-D-galactose residues in beta-D-galactosides.. The polypeptide is Beta-galactosidase 15 (Oryza sativa subsp. japonica (Rice)).